The primary structure comprises 615 residues: Chaperone protein DnaK (615 aa).

At threonine 177 the chain carries Phosphothreonine; by autocatalysis. Residues 567 to 615 are disordered; sequence TKESQGIAMKAYQKAQEKQAQEKGTQENTTAKNEKPQDEVVDADFEEKK. Residues 581 to 591 are compositionally biased toward basic and acidic residues; that stretch reads AQEKQAQEKGT. Residues 605–615 show a composition bias toward acidic residues; the sequence is EVVDADFEEKK.

The protein belongs to the heat shock protein 70 family.

Functionally, acts as a chaperone. The polypeptide is Chaperone protein DnaK (Onion yellows phytoplasma (strain OY-M)).